A 745-amino-acid chain; its full sequence is Eukaryotic translation initiation factor 3 subunit B (745 aa).

The RRM domain maps to aspartate 41–aspartate 129. WD repeat units follow at residues glutamate 189–arginine 230, tryptophan 251–proline 293, glycine 303–lysine 344, and glycine 580–histidine 625. Residues glycine 644–alanine 745 adopt a coiled-coil conformation.

This sequence belongs to the eIF-3 subunit B family. Component of the eukaryotic translation initiation factor 3 (eIF-3) complex.

The protein localises to the cytoplasm. RNA-binding component of the eukaryotic translation initiation factor 3 (eIF-3) complex, which is involved in protein synthesis of a specialized repertoire of mRNAs and, together with other initiation factors, stimulates binding of mRNA and methionyl-tRNAi to the 40S ribosome. The eIF-3 complex specifically targets and initiates translation of a subset of mRNAs involved in cell proliferation. This is Eukaryotic translation initiation factor 3 subunit B from Mycosarcoma maydis (Corn smut fungus).